Consider the following 172-residue polypeptide: Gamma-crystallin-4 (172 aa).

Beta/gamma crystallin 'Greek key' domains lie at 1–37 (IFFYEERNFQGRCYECSSECSDLSSYFNRCNSIRVES) and 38–80 (GNWI…RFIP). The connecting peptide stretch occupies residues 81-85 (HPHSQ). 2 consecutive Beta/gamma crystallin 'Greek key' domains span residues 86–126 (YKMR…NVSD) and 127–169 (GHWM…RRVH).

It belongs to the beta/gamma-crystallin family. In terms of assembly, monomer.

Functionally, crystallins are the dominant structural components of the vertebrate eye lens. The protein is Gamma-crystallin-4 (cryg4) of Xenopus laevis (African clawed frog).